We begin with the raw amino-acid sequence, 470 residues long: Cell division protein FtsP (470 aa).

Residues 1–27 constitute a signal peptide (tat-type signal); that stretch reads MSLSRRQFIQASGIALCAGAVPLKASA. Residues 68 to 164 enclose the Plastocyanin-like domain; sequence WGINGRYLGP…NGLAGMWLVE (97 aa).

It belongs to the FtsP family. Exported by the Tat system. The position of the signal peptide cleavage has been experimentally proven. Can also be exported by the Sec system.

It is found in the periplasm. Functionally, cell division protein that is required for growth during stress conditions. May be involved in protecting or stabilizing the divisomal assembly under conditions of stress. The polypeptide is Cell division protein FtsP (Escherichia coli (strain K12)).